A 142-amino-acid polypeptide reads, in one-letter code: RNA-directed DNA polymerase homolog (142 aa).

The protein localises to the mitochondrion. It carries out the reaction RNA(n) + a ribonucleoside 5'-triphosphate = RNA(n+1) + diphosphate. This is RNA-directed DNA polymerase homolog from Oenothera berteroana (Bertero's evening primrose).